The following is a 266-amino-acid chain: UPF0294 protein YafD (266 aa).

The protein belongs to the UPF0294 family.

The protein localises to the cytoplasm. The sequence is that of UPF0294 protein YafD from Salmonella newport (strain SL254).